Reading from the N-terminus, the 180-residue chain is Dual-action ribosomal maturation protein DarP (180 aa).

Positions 1-13 (MKPDKTENTEHGI) are enriched in basic and acidic residues. Residues 1–21 (MKPDKTENTEHGIEPVSKTKR) are disordered.

Belongs to the DarP family.

It is found in the cytoplasm. In terms of biological role, member of a network of 50S ribosomal subunit biogenesis factors which assembles along the 30S-50S interface, preventing incorrect 23S rRNA structures from forming. Promotes peptidyl transferase center (PTC) maturation. This chain is Dual-action ribosomal maturation protein DarP, found in Methylobacillus flagellatus (strain ATCC 51484 / DSM 6875 / VKM B-1610 / KT).